The following is a 656-amino-acid chain: Chaperone protein DnaK (656 aa).

The residue at position 204 (threonine 204) is a Phosphothreonine; by autocatalysis. The segment at 602 to 656 (KLAERVYAKKGGAAGAPPGGEAEGEPQAQAGGKKEDVVDAEFEEVKDEKKKDEDK) is disordered. Residues 620–632 (GGEAEGEPQAQAG) show a composition bias toward low complexity. Basic and acidic residues predominate over residues 647-656 (KDEKKKDEDK).

The protein belongs to the heat shock protein 70 family.

In terms of biological role, acts as a chaperone. This chain is Chaperone protein DnaK, found in Coxiella burnetii (strain CbuG_Q212) (Coxiella burnetii (strain Q212)).